A 74-amino-acid chain; its full sequence is Defensin (74 aa).

The first 21 residues, M1–A21, serve as a signal peptide directing secretion. Positions D22–V34 are excised as a propeptide. Cystine bridges form between C40/C61, C47/C69, and C51/C71.

In terms of tissue distribution, expressed in the hemocytes, fat body and ovaries.

Its subcellular location is the secreted. Its function is as follows. Antibacterial peptide mostly active against Gram-positive bacteria. In Rhipicephalus microplus (Cattle tick), this protein is Defensin.